A 44-amino-acid polypeptide reads, in one-letter code: METLLLSRLPEAYVVFSPIVDVLPIIPVFFLLLAFVWQAAIGFR.

Residues 1-7 (METLLLS) constitute a propeptide that is removed on maturation. Residues 23–43 (LPIIPVFFLLLAFVWQAAIGF) form a helical membrane-spanning segment.

Belongs to the PsbK family. PSII is composed of 1 copy each of membrane proteins PsbA, PsbB, PsbC, PsbD, PsbE, PsbF, PsbH, PsbI, PsbJ, PsbK, PsbL, PsbM, PsbT, PsbX, PsbY, PsbZ, Psb30/Ycf12, at least 3 peripheral proteins of the oxygen-evolving complex and a large number of cofactors. It forms dimeric complexes.

The protein localises to the plastid. The protein resides in the chloroplast thylakoid membrane. Functionally, one of the components of the core complex of photosystem II (PSII). PSII is a light-driven water:plastoquinone oxidoreductase that uses light energy to abstract electrons from H(2)O, generating O(2) and a proton gradient subsequently used for ATP formation. It consists of a core antenna complex that captures photons, and an electron transfer chain that converts photonic excitation into a charge separation. The polypeptide is Photosystem II reaction center protein K (Phaeodactylum tricornutum (strain CCAP 1055/1)).